A 55-amino-acid chain; its full sequence is U17-myrmicitoxin-Mri1b (55 aa).

The signal sequence occupies residues 1–31 (MENSRTSTFTAYVTVAFLLISTFVTMVVTES). Q32 bears the Pyrrolidone carboxylic acid mark.

Contains 1 disulfide bond. In terms of tissue distribution, expressed by the venom gland.

Its subcellular location is the secreted. In Manica rubida (European giant red ant), this protein is U17-myrmicitoxin-Mri1b.